Here is a 490-residue protein sequence, read N- to C-terminus: Glucose-6-phosphate 1-dehydrogenase (490 aa).

Residues arginine 48, 90-91, and lysine 145 contribute to the NADP(+) site; that span reads DI. Substrate contacts are provided by histidine 175, lysine 179, glutamate 213, and aspartate 232. Histidine 237 serves as the catalytic Proton acceptor. Residues lysine 340 and lysine 345 each contribute to the substrate site.

This sequence belongs to the glucose-6-phosphate dehydrogenase family.

It carries out the reaction D-glucose 6-phosphate + NADP(+) = 6-phospho-D-glucono-1,5-lactone + NADPH + H(+). Its pathway is carbohydrate degradation; pentose phosphate pathway; D-ribulose 5-phosphate from D-glucose 6-phosphate (oxidative stage): step 1/3. In terms of biological role, catalyzes the oxidation of glucose 6-phosphate to 6-phosphogluconolactone. The polypeptide is Glucose-6-phosphate 1-dehydrogenase (Buchnera aphidicola subsp. Baizongia pistaciae (strain Bp)).